A 67-amino-acid chain; its full sequence is Small ribosomal subunit protein eS17 (67 aa).

It belongs to the eukaryotic ribosomal protein eS17 family.

This is Small ribosomal subunit protein eS17 from Thermococcus sibiricus (strain DSM 12597 / MM 739).